A 269-amino-acid chain; its full sequence is Glutamate 5-kinase 2 (269 aa).

K16 is a binding site for ATP. The substrate site is built by S57, D144, and N156. Residue S218–K224 coordinates ATP.

The protein belongs to the glutamate 5-kinase family.

The protein resides in the cytoplasm. The catalysed reaction is L-glutamate + ATP = L-glutamyl 5-phosphate + ADP. It functions in the pathway amino-acid biosynthesis; L-proline biosynthesis; L-glutamate 5-semialdehyde from L-glutamate: step 1/2. In terms of biological role, catalyzes the transfer of a phosphate group to glutamate to form L-glutamate 5-phosphate. The sequence is that of Glutamate 5-kinase 2 from Rhizobium meliloti (strain 1021) (Ensifer meliloti).